The chain runs to 355 residues: Isopentenyl-diphosphate delta-isomerase (355 aa).

12 to 13 (RK) serves as a coordination point for substrate. FMN-binding positions include S70, 71–73 (SMT), S101, and N130. A substrate-binding site is contributed by 101-103 (SMR). Substrate is bound at residue Q165. E166 contributes to the Mg(2+) binding site. FMN is bound by residues K197 and 308 to 309 (AG).

It belongs to the IPP isomerase type 2 family. In terms of assembly, homooctamer. Dimer of tetramers. The cofactor is FMN. Requires NADPH as cofactor. Mg(2+) is required as a cofactor.

It localises to the cytoplasm. It carries out the reaction isopentenyl diphosphate = dimethylallyl diphosphate. Its function is as follows. Involved in the biosynthesis of isoprenoids. Catalyzes the 1,3-allylic rearrangement of the homoallylic substrate isopentenyl (IPP) to its allylic isomer, dimethylallyl diphosphate (DMAPP). The chain is Isopentenyl-diphosphate delta-isomerase from Chlorobium phaeovibrioides (strain DSM 265 / 1930) (Prosthecochloris vibrioformis (strain DSM 265)).